The chain runs to 257 residues: Probable septum site-determining protein MinC (257 aa).

Positions 123 to 141 (AVEAAAAPAAEPTPEPGAA) are enriched in low complexity. The tract at residues 123–144 (AVEAAAAPAAEPTPEPGAASQP) is disordered.

The protein belongs to the MinC family. In terms of assembly, interacts with MinD and FtsZ.

Functionally, cell division inhibitor that blocks the formation of polar Z ring septums. Rapidly oscillates between the poles of the cell to destabilize FtsZ filaments that have formed before they mature into polar Z rings. Prevents FtsZ polymerization. This Burkholderia multivorans (strain ATCC 17616 / 249) protein is Probable septum site-determining protein MinC.